Reading from the N-terminus, the 128-residue chain is Iron-sulfur cluster insertion protein ErpA 1 (128 aa).

Residues Cys-47, Cys-111, and Cys-113 each coordinate iron-sulfur cluster.

It belongs to the HesB/IscA family. In terms of assembly, homodimer. The cofactor is iron-sulfur cluster.

Functionally, required for insertion of 4Fe-4S clusters for at least IspG. The chain is Iron-sulfur cluster insertion protein ErpA 1 from Methylococcus capsulatus (strain ATCC 33009 / NCIMB 11132 / Bath).